We begin with the raw amino-acid sequence, 283 residues long: Pantothenate synthetase (283 aa).

31–38 (MGALHEGH) contributes to the ATP binding site. H38 (proton donor) is an active-site residue. Q62 contributes to the (R)-pantoate binding site. Position 62 (Q62) interacts with beta-alanine. 148-151 (GKKD) is a binding site for ATP. Residue Q154 participates in (R)-pantoate binding. ATP contacts are provided by residues V177 and 185–188 (RSSR).

Belongs to the pantothenate synthetase family. Homodimer.

The protein resides in the cytoplasm. The enzyme catalyses (R)-pantoate + beta-alanine + ATP = (R)-pantothenate + AMP + diphosphate + H(+). The protein operates within cofactor biosynthesis; (R)-pantothenate biosynthesis; (R)-pantothenate from (R)-pantoate and beta-alanine: step 1/1. Its function is as follows. Catalyzes the condensation of pantoate with beta-alanine in an ATP-dependent reaction via a pantoyl-adenylate intermediate. In Staphylococcus haemolyticus (strain JCSC1435), this protein is Pantothenate synthetase.